Here is a 217-residue protein sequence, read N- to C-terminus: NADH dehydrogenase (ubiquinone) 23 kDa subunit (217 aa).

Residues 1–26 (MSLTMRIFTASRNGQRLFGSHGARLL) constitute a mitochondrion transit peptide. 2 4Fe-4S ferredoxin-type domains span residues 109–138 (RRYPSGEERCIACKLCEAICPAQAITIEAE) and 148–177 (TRYDIDMTKCIYCGFCQEACPVDAIVEGPN). [4Fe-4S] cluster contacts are provided by C118, C121, C124, C128, C157, C160, C163, and C167.

Belongs to the complex I 23 kDa subunit family. Part of the mitochondrial membrane respiratory chain NADH dehydrogenase (Complex I). This is a component of the iron-sulfur (IP) fragment of the enzyme. [4Fe-4S] cluster serves as cofactor. Expressed in muscles (at protein level).

It is found in the mitochondrion. The enzyme catalyses a ubiquinone + NADH + 5 H(+)(in) = a ubiquinol + NAD(+) + 4 H(+)(out). In terms of biological role, core subunit of the mitochondrial membrane respiratory chain NADH dehydrogenase (Complex I) that is believed to belong to the minimal assembly required for catalysis. Complex I functions in the transfer of electrons from NADH to the respiratory chain. The immediate electron acceptor for the enzyme is believed to be ubiquinone. This chain is NADH dehydrogenase (ubiquinone) 23 kDa subunit, found in Drosophila melanogaster (Fruit fly).